The following is a 492-amino-acid chain: Catalase isozyme 1 (492 aa).

Active-site residues include His65 and Asn138. Tyr348 is a binding site for heme.

It belongs to the catalase family. Homotetramer. The cofactor is heme.

The protein localises to the cytoplasm. Its subcellular location is the cytosol. It localises to the peroxisome matrix. It catalyses the reaction 2 H2O2 = O2 + 2 H2O. Its activity is regulated as follows. Inhibited by salicylic acid. Functionally, catalyzes the degradation of hydrogen peroxide (H(2)O(2)) generated by peroxisomal oxidases to water and oxygen, thereby protecting cells from the toxic effects of hydrogen peroxide. This chain is Catalase isozyme 1 (CAT-1), found in Nicotiana tabacum (Common tobacco).